A 63-amino-acid chain; its full sequence is Putative F-box protein At1g47702 (63 aa).

The F-box domain maps to 23–63; it reads KDRISDLPNRILGKIIVKLPLDEAVRIMALSKRWKSIWDDN.

This is Putative F-box protein At1g47702 from Arabidopsis thaliana (Mouse-ear cress).